Reading from the N-terminus, the 57-residue chain is Large ribosomal subunit protein bL32 (57 aa).

Belongs to the bacterial ribosomal protein bL32 family.

The protein is Large ribosomal subunit protein bL32 of Geobacillus kaustophilus (strain HTA426).